Reading from the N-terminus, the 852-residue chain is Taste receptor type 1 member 3 (852 aa).

Positions 1–20 are cleaved as a signal peptide; that stretch reads MLGPAVLGLSLWALLHPGTG. Residues 21-570 lie on the Extracellular side of the membrane; sequence APLCLSQQLR…FLAWGEPAVL (550 aa). N85, N130, N264, N285, N380, N411, N432, and N475 each carry an N-linked (GlcNAc...) asparagine glycan. Positions 536–545 are required for brazzein responsiveness; the sequence is IACTFCGQDE. A helical transmembrane segment spans residues 571-591; that stretch reads LLLLLLSLALGLVLAALGLFV. Over 592 to 603 the chain is Cytoplasmic; it reads HHRDSPLVQASG. A helical membrane pass occupies residues 604-624; that stretch reads GPLACFGLVCLGLVCLSVLLF. Residues 625–639 are Extracellular-facing; that stretch reads PGQPSPARCLAQQPL. The helical transmembrane segment at 640–660 threads the bilayer; that stretch reads SHLPLTGCLSTLFLQAAEIFV. Residues 661-682 are Cytoplasmic-facing; that stretch reads ESELPLSWADRLSGCLRGPWAW. A helical membrane pass occupies residues 683-703; the sequence is LVVLLAMLVEVALCTWYLVAF. Over 704–729 the chain is Extracellular; sequence PPEVVTDWHMLPTEALVHCRTRSWVS. Residues 730 to 750 traverse the membrane as a helical segment; the sequence is FGLAHATNATLAFLCFLGTFL. Topologically, residues 751–762 are cytoplasmic; that stretch reads VRSQPGCYNRAR. Residues 763 to 783 form a helical membrane-spanning segment; that stretch reads GLTFAMLAYFITWVSFVPLLA. Over 784-789 the chain is Extracellular; the sequence is NVQVVL. The chain crosses the membrane as a helical span at residues 790 to 810; the sequence is RPAVQMGALLLCVLGILAAFH. Residues 811 to 852 are Cytoplasmic-facing; it reads LPRCYLLMRQPGLNTPEFFLGGGPGDAQGQNDGNTGNQGKHE.

It belongs to the G-protein coupled receptor 3 family. TAS1R subfamily. In terms of assembly, forms homodimers or heterodimers with TAS1R1 and TAS1R2.

It is found in the cell membrane. Its function is as follows. Putative taste receptor. TAS1R1/TAS1R3 responds to the umami taste stimulus (the taste of monosodium glutamate). TAS1R2/TAS1R3 recognizes diverse natural and synthetic sweeteners. TAS1R3 is essential for the recognition and response to the disaccharide trehalose. Sequence differences within and between species can significantly influence the selectivity and specificity of taste responses. The protein is Taste receptor type 1 member 3 (TAS1R3) of Homo sapiens (Human).